Consider the following 285-residue polypeptide: NAD kinase (285 aa).

Asp64 serves as the catalytic Proton acceptor. Residues 64-65 (DG), 138-139 (ND), Arg149, Arg166, Asp168, Leu176, 179-184 (SGYTIS), and Gln238 each bind NAD(+).

This sequence belongs to the NAD kinase family. It depends on a divalent metal cation as a cofactor.

The protein localises to the cytoplasm. It carries out the reaction NAD(+) + ATP = ADP + NADP(+) + H(+). Its function is as follows. Involved in the regulation of the intracellular balance of NAD and NADP, and is a key enzyme in the biosynthesis of NADP. Catalyzes specifically the phosphorylation on 2'-hydroxyl of the adenosine moiety of NAD to yield NADP. In Lawsonia intracellularis (strain PHE/MN1-00), this protein is NAD kinase.